Reading from the N-terminus, the 168-residue chain is Photosystem I assembly protein Ycf3 (168 aa).

TPR repeat units follow at residues 35 to 68, 72 to 105, and 120 to 153; these read AFTY…EIDP, SYIL…NPFL, and GEQA…TPGN.

It belongs to the Ycf3 family.

It localises to the plastid. The protein resides in the chloroplast thylakoid membrane. Essential for the assembly of the photosystem I (PSI) complex. May act as a chaperone-like factor to guide the assembly of the PSI subunits. This chain is Photosystem I assembly protein Ycf3, found in Piper cenocladum (Ant piper).